The sequence spans 89 residues: Small ribosomal subunit protein uS15 (89 aa).

The protein belongs to the universal ribosomal protein uS15 family. In terms of assembly, part of the 30S ribosomal subunit. Forms a bridge to the 50S subunit in the 70S ribosome, contacting the 23S rRNA.

In terms of biological role, one of the primary rRNA binding proteins, it binds directly to 16S rRNA where it helps nucleate assembly of the platform of the 30S subunit by binding and bridging several RNA helices of the 16S rRNA. Forms an intersubunit bridge (bridge B4) with the 23S rRNA of the 50S subunit in the ribosome. The chain is Small ribosomal subunit protein uS15 from Leifsonia xyli subsp. xyli (strain CTCB07).